The chain runs to 626 residues: Dynein, cytoplasmic 1, intermediate chain 2a (626 aa).

Over residues 20–43 (QIREEKKRKEEERKKKEAELKKDA) the composition is skewed to basic and acidic residues. Disordered regions lie at residues 20–108 (QIRE…RTLH) and 142–197 (KEVV…HELT). The span at 82–99 (TAKSVGSPSEAGSQDSGD) shows a compositional bias: polar residues. Acidic residues predominate over residues 160 to 169 (KDEEDEEEET). Over residues 177-197 (ETEKEKPEEKQVEEALPHELT) the composition is skewed to basic and acidic residues. 7 WD repeats span residues 265-314 (SKQR…ATPE), 318-358 (HCQS…RTPV), 367-408 (AHTH…QPQD), 417-457 (SKSV…AGIS), 462-507 (GHHG…PLYS), 510-550 (DNSD…EVPT), and 556-595 (DGSPALNRLRWSQSGREIAVGDSEGQIHIYDVGEQIAVPR).

It belongs to the dynein intermediate chain family. As to quaternary structure, homodimer. The cytoplasmic dynein 1 complex consists of two catalytic heavy chains (HCs) and a number of non-catalytic subunits presented by intermediate chains (ICs), light intermediate chains (LICs) and light chains (LCs); the composition seems to vary in respect to the IC, LIC and LC composition. The heavy chain homodimer serves as a scaffold for the probable homodimeric assembly of the respective non-catalytic subunits. The ICs and LICs bind directly to the HC dimer and the LCs assemble on the IC dimer.

The protein localises to the cytoplasm. Its subcellular location is the cytoskeleton. Acts as one of several non-catalytic accessory components of the cytoplasmic dynein 1 complex that are thought to be involved in linking dynein to cargos and to adapter proteins that regulate dynein function. Cytoplasmic dynein 1 acts as a motor for the intracellular retrograde motility of vesicles and organelles along microtubules. Plays a role in the development of anterior brain and cartilaginous structures. This is Dynein, cytoplasmic 1, intermediate chain 2a (dync1i2a) from Danio rerio (Zebrafish).